The following is a 694-amino-acid chain: 4-alpha-glucanotransferase (694 aa).

Belongs to the disproportionating enzyme family.

It localises to the cytoplasm. It catalyses the reaction Transfers a segment of a (1-&gt;4)-alpha-D-glucan to a new position in an acceptor, which may be glucose or a (1-&gt;4)-alpha-D-glucan.. This is 4-alpha-glucanotransferase (malQ) from Escherichia coli (strain K12).